The following is a 98-amino-acid chain: NADH-ubiquinone oxidoreductase chain 4L (98 aa).

3 consecutive transmembrane segments (helical) span residues 2 to 22 (PFIY…LLLF), 30 to 50 (LLCL…TTLG), and 61 to 81 (IILM…LVTI).

This sequence belongs to the complex I subunit 4L family. Core subunit of respiratory chain NADH dehydrogenase (Complex I) which is composed of 45 different subunits.

It localises to the mitochondrion inner membrane. It carries out the reaction a ubiquinone + NADH + 5 H(+)(in) = a ubiquinol + NAD(+) + 4 H(+)(out). Its function is as follows. Core subunit of the mitochondrial membrane respiratory chain NADH dehydrogenase (Complex I) which catalyzes electron transfer from NADH through the respiratory chain, using ubiquinone as an electron acceptor. Part of the enzyme membrane arm which is embedded in the lipid bilayer and involved in proton translocation. The polypeptide is NADH-ubiquinone oxidoreductase chain 4L (MT-ND4L) (Bradypus tridactylus (Pale-throated three-toed sloth)).